We begin with the raw amino-acid sequence, 305 residues long: uncharacterized protein (305 aa).

Over residues 1–10 (MLWAQRKKRK) the composition is skewed to basic residues. The interval 1-30 (MLWAQRKKRKATTETTEDKPAESHRPNDSW) is disordered. Basic and acidic residues predominate over residues 16 to 27 (TEDKPAESHRPN). Residue S39 is modified to Phosphoserine. A compositionally biased stretch (polar residues) spans 92-101 (QKISGTSVSK). Residues 92-114 (QKISGTSVSKEMQRESGKSPSME) form a disordered region. S158 bears the Phosphoserine mark. Residues 197 to 208 (SHHGNQSHQNHN) are compositionally biased toward low complexity. The tract at residues 197–305 (SHHGNQSHQN…VNRRNQIYDS (109 aa)) is disordered. Composition is skewed to polar residues over residues 209–221 (TYPC…SRSV) and 231–244 (LSHQ…SHQN). Over residues 247–293 (GHPSQQGHSSHSNQQGHLGLSSQQGHPSQSSHQSHQGQPGHPNHQSH) the composition is skewed to low complexity. Over residues 294–305 (SLVNRRNQIYDS) the composition is skewed to polar residues.

This is an uncharacterized protein from Rattus norvegicus (Rat).